The sequence spans 568 residues: Proline--tRNA ligase (568 aa).

The protein belongs to the class-II aminoacyl-tRNA synthetase family. ProS type 1 subfamily. Homodimer.

It localises to the cytoplasm. It catalyses the reaction tRNA(Pro) + L-proline + ATP = L-prolyl-tRNA(Pro) + AMP + diphosphate. Functionally, catalyzes the attachment of proline to tRNA(Pro) in a two-step reaction: proline is first activated by ATP to form Pro-AMP and then transferred to the acceptor end of tRNA(Pro). As ProRS can inadvertently accommodate and process non-cognate amino acids such as alanine and cysteine, to avoid such errors it has two additional distinct editing activities against alanine. One activity is designated as 'pretransfer' editing and involves the tRNA(Pro)-independent hydrolysis of activated Ala-AMP. The other activity is designated 'posttransfer' editing and involves deacylation of mischarged Ala-tRNA(Pro). The misacylated Cys-tRNA(Pro) is not edited by ProRS. The protein is Proline--tRNA ligase of Chromobacterium violaceum (strain ATCC 12472 / DSM 30191 / JCM 1249 / CCUG 213 / NBRC 12614 / NCIMB 9131 / NCTC 9757 / MK).